Here is a 144-residue protein sequence, read N- to C-terminus: RxLR effector protein PITG_03192 (144 aa).

The signal sequence occupies residues 1–24 (MRVGFVFALLVVSVIVCFNGLTSA). The RxLR-dEER motif lies at 49–58 (RNLRASGEER). Asparagine 115 is a glycosylation site (N-linked (GlcNAc...) asparagine). The helical transmembrane segment at 122–142 (FFILATLVMFPIGVWAVVTNY) threads the bilayer.

It belongs to the RxLR effector family. In terms of assembly, interacts with the C-terminal portions the ER-associated potato NAC transcription factors NTP1 and NTP2.

It localises to the secreted. It is found in the host endoplasmic reticulum membrane. Effector that is required for full virulence. Targets host NTP1 and NTP2 transcription factors and prevents their pathogen-associated molecular pattern (PAMP)-triggered re-localization from the endoplasmic reticulum into the nucleus, where they contribute to prevent disease progression by P.infestans. This chain is RxLR effector protein PITG_03192, found in Phytophthora infestans (strain T30-4) (Potato late blight agent).